We begin with the raw amino-acid sequence, 214 residues long: Pyrrolidone-carboxylate peptidase (214 aa).

Catalysis depends on residues E80, C143, and H166.

This sequence belongs to the peptidase C15 family. In terms of assembly, homotetramer.

The protein resides in the cytoplasm. The catalysed reaction is Release of an N-terminal pyroglutamyl group from a polypeptide, the second amino acid generally not being Pro.. Removes 5-oxoproline from various penultimate amino acid residues except L-proline. In Escherichia fergusonii (strain ATCC 35469 / DSM 13698 / CCUG 18766 / IAM 14443 / JCM 21226 / LMG 7866 / NBRC 102419 / NCTC 12128 / CDC 0568-73), this protein is Pyrrolidone-carboxylate peptidase.